The sequence spans 578 residues: E3 ubiquitin-protein ligase hrd-like protein 1 (578 aa).

Residues 32–52 form a helical membrane-spanning segment; the sequence is GYLALSLCVAFIASASVFTHF. Asparagine 68 is a glycosylation site (N-linked (GlcNAc...) asparagine). 7 helical membrane-spanning segments follow: residues 76-96, 101-121, 134-154, 163-183, 202-222, 230-250, and 286-306; these read FGINIDTIAGSTVFQMAHYIL, LIWVAINSYFAILAMCTKLII, VAARQAFLSYILLTIVYLSVV, VMPWMIWGGVCGFLSHLQFVT, SFISLFLFFVSIAMTFMVSRF, PAVLLYFDCLLAVFRSTYILF, and FLSYAQLFVFAPGLNLTSIFF. The RING-type; atypical zinc-finger motif lies at 350-388; it reads CIVCWELLGTSRRLPCSHQFHDWCLMWWLAQDSSCPTCR. One can recognise a CUE domain in the interval 447–489; it reads QLQSMLETVLEMFPQMSPETILADLRQSGSAQSTIENILEGRM. Asparagine 492 carries an N-linked (GlcNAc...) asparagine glycan.

It is found in the membrane. Proposed to have a role in neuroprotection. This Caenorhabditis briggsae protein is E3 ubiquitin-protein ligase hrd-like protein 1.